Here is a 284-residue protein sequence, read N- to C-terminus: Pseudopaline exporter CntI (284 aa).

10 helical membrane-spanning segments follow: residues 2 to 22 (VLDLLKSGVLLAVLASFTFSV), 34 to 54 (LPAAEIVFFRSAIGTLLIYLL), 74 to 94 (GVMGALYLVCYFYAIAHIPLA), 96 to 116 (ASILAHMSPFFVILFSALFLG), 122 to 142 (AVYWLLLVVVLGALMIVKPFS), 147 to 167 (SVYAVVGLLSAVFAAGASVAI), 179 to 199 (IVFYFLAVATLVAIPLMWNDF), 209 to 229 (GLLLAIGVVSLLGQVFLTRAF), 236 to 256 (IVAVTRYIGIVFNAGWGWLFW), and 259 to 279 (VPDALTIAGGVLIVVACIALS). 2 consecutive EamA domains span residues 8–138 (SGVL…LMIV) and 151–279 (VVGL…IALS).

Belongs to the EamA transporter family.

The protein localises to the cell inner membrane. Its function is as follows. Transports the metallophore pseudopaline, which is involved in the acquisition of nickel and zinc, and thus enables bacterial growth inside the host, where metal access is limited. Is probably involved in the export of pseudopaline. Essential for iron acquisition during the interaction with airway mucus secretions (AMS). This Pseudomonas aeruginosa (strain ATCC 15692 / DSM 22644 / CIP 104116 / JCM 14847 / LMG 12228 / 1C / PRS 101 / PAO1) protein is Pseudopaline exporter CntI.